The chain runs to 213 residues: Uracil phosphoribosyltransferase (213 aa).

5-phospho-alpha-D-ribose 1-diphosphate-binding positions include Arg-78, Arg-103, and 130–138; that span reads DPMLATGGS. Uracil is bound by residues Ile-193 and 198–200; that span reads GDA. Asp-199 is a 5-phospho-alpha-D-ribose 1-diphosphate binding site.

This sequence belongs to the UPRTase family. The cofactor is Mg(2+).

It carries out the reaction UMP + diphosphate = 5-phospho-alpha-D-ribose 1-diphosphate + uracil. Its pathway is pyrimidine metabolism; UMP biosynthesis via salvage pathway; UMP from uracil: step 1/1. Its activity is regulated as follows. Allosterically activated by GTP. Its function is as follows. Catalyzes the conversion of uracil and 5-phospho-alpha-D-ribose 1-diphosphate (PRPP) to UMP and diphosphate. In Bordetella bronchiseptica (strain ATCC BAA-588 / NCTC 13252 / RB50) (Alcaligenes bronchisepticus), this protein is Uracil phosphoribosyltransferase.